The sequence spans 296 residues: MFKSGFVTIVGRPNVGKSTLLNAIMKEKLSIVSCRPQTTRNNIQTILTEDNYQLVFVDTPGIHKPKHKLGEYMVKSASEAMKDVDLVLFLINPDEKPGRGDLFIIEQLKEVKVPVFLVLNKIDENPQEKVAETLKTYSELMEFEEIIPISALKGKNIDLLKELMFKYIPEGPQYYPEDMIIDQNERFIVAEIVREKALRLLSEEVPHGIAVEILQMKKNEKGTYHIEGNILCEKNSHKPIIIGKGGSKLKKISQYARQDIEAFLQSKVYIRLWVKVKEEWRDNQSLLKELGYKNMK.

In terms of domain architecture, Era-type G spans 3–170; that stretch reads KSGFVTIVGR…KELMFKYIPE (168 aa). The segment at 11-18 is G1; sequence GRPNVGKS. Residue 11–18 participates in GTP binding; it reads GRPNVGKS. The interval 37 to 41 is G2; it reads QTTRN. Positions 58 to 61 are G3; sequence DTPG. GTP contacts are provided by residues 58–62 and 120–123; these read DTPGI and NKID. Positions 120-123 are G4; that stretch reads NKID. The interval 149-151 is G5; that stretch reads ISA. The 78-residue stretch at 201 to 278 folds into the KH type-2 domain; it reads LSEEVPHGIA…YIRLWVKVKE (78 aa).

Belongs to the TRAFAC class TrmE-Era-EngA-EngB-Septin-like GTPase superfamily. Era GTPase family. Monomer.

The protein localises to the cytoplasm. It is found in the cell membrane. An essential GTPase that binds both GDP and GTP, with rapid nucleotide exchange. Plays a role in 16S rRNA processing and 30S ribosomal subunit biogenesis and possibly also in cell cycle regulation and energy metabolism. This is GTPase Era from Clostridium botulinum (strain ATCC 19397 / Type A).